The primary structure comprises 258 residues: Tritrans,polycis-undecaprenyl-diphosphate synthase (geranylgeranyl-diphosphate specific) (258 aa).

The active site involves Asp-37. Position 37 (Asp-37) interacts with Mg(2+). Substrate contacts are provided by residues 38-41 (GNRR), His-54, and 82-84 (STE). The active-site Proton acceptor is Asn-85. Substrate-binding positions include Phe-86, Arg-88, Arg-207, and 213-215 (RIS). Glu-226 contacts Mg(2+).

Belongs to the UPP synthase family. Homodimer. It depends on Mg(2+) as a cofactor.

It carries out the reaction geranylgeranyl diphosphate + 7 isopentenyl diphosphate = tri-trans,hepta-cis-undecaprenyl diphosphate + 7 diphosphate. Its function is as follows. Catalyzes the sequential condensation of isopentenyl diphosphate (IPP) with geranylgeranyl diphosphate (GGPP) to yield (2Z,6Z,10Z,14Z,18Z,22Z,26Z,30E,34E,38E)-undecaprenyl diphosphate (tritrans,heptacis-UPP). It is probably the precursor of glycosyl carrier lipids. The polypeptide is Tritrans,polycis-undecaprenyl-diphosphate synthase (geranylgeranyl-diphosphate specific) (Thermoplasma volcanium (strain ATCC 51530 / DSM 4299 / JCM 9571 / NBRC 15438 / GSS1)).